The primary structure comprises 226 residues: UPF0758 protein Spy49_0870 (226 aa).

Positions 103-225 (SVLTSVQVAE…YYSFREKSTL (123 aa)) constitute an MPN domain. Zn(2+) is bound by residues His174, His176, and Asp187. The JAMM motif motif lies at 174–187 (HNHPSGNIEPSSND).

It belongs to the UPF0758 family.

The sequence is that of UPF0758 protein Spy49_0870 from Streptococcus pyogenes serotype M49 (strain NZ131).